A 289-amino-acid chain; its full sequence is MKLIILEHYSQASEWAAKYIRNRIIQFNPGPEKYFTLGLPTGSTPLGCYKKLIEYYKNGDLPFKYVKTFNMDEYVGLPRDHPESYHSFMWNNFFKHIDIHPENTHILDGNAVDLQAECDAFEEKIKAAGGIELFVGGIGPDGHIAFNEPGSSLVSRTRVKTLAMDTILANARFFDGELTKVPTMALTVGVGTVMDAREVMILITGAHKAFALYKAIEEGVNHMWTVSAFQQHPRTVFVCDEDATLELKVKTVKYFKGLMLVHNKLVDPLYSIKEKETEKSQSSKKPYSD.

N6-acetyllysine is present on Lys64. The Proton acceptor; for enolization step role is filled by Asp72. The active-site For ring-opening step is the Asp141. The active-site Proton acceptor; for ring-opening step is His143. Catalysis depends on Glu148, which acts as the For ring-opening step. Thr161 is modified (phosphothreonine).

This sequence belongs to the glucosamine/galactosamine-6-phosphate isomerase family. As to quaternary structure, homohexamer.

Its subcellular location is the cytoplasm. The catalysed reaction is alpha-D-glucosamine 6-phosphate + H2O = beta-D-fructose 6-phosphate + NH4(+). It participates in nucleotide-sugar biosynthesis; UDP-N-acetyl-alpha-D-glucosamine biosynthesis; alpha-D-glucosamine 6-phosphate from D-fructose 6-phosphate: step 1/1. Allosterically activated by N-acetylglucosamine-6-phosphate (GlcNAc6P). Its function is as follows. Catalyzes the reversible conversion of alpha-D-glucosamine 6-phosphate (GlcN-6P) into beta-D-fructose 6-phosphate (Fru-6P) and ammonium ion, a regulatory reaction step in de novo uridine diphosphate-N-acetyl-alpha-D-glucosamine (UDP-GlcNAc) biosynthesis via hexosamine pathway. Deamination is coupled to aldo-keto isomerization mediating the metabolic flux from UDP-GlcNAc toward Fru-6P. At high ammonium level can drive amination and isomerization of Fru-6P toward hexosamines and UDP-GlcNAc synthesis. Has a role in fine tuning the metabolic fluctuations of cytosolic UDP-GlcNAc and their effects on hyaluronan synthesis that occur during tissue remodeling. Seems to trigger calcium oscillations in mammalian eggs. These oscillations serve as the essential trigger for egg activation and early development of the embryo. This Pongo abelii (Sumatran orangutan) protein is Glucosamine-6-phosphate deaminase 1.